A 244-amino-acid polypeptide reads, in one-letter code: Probable ABC transporter ATP-binding protein p29 (244 aa).

Residues 6–241 enclose the ABC transporter domain; sequence LVFDQVSLRY…KLTKQKLMQI (236 aa). 38–45 contacts ATP; the sequence is GKSGVGKT.

This sequence belongs to the ABC transporter superfamily.

Part of a high-affinity transport system. In Mycoplasma pneumoniae (strain ATCC 29342 / M129 / Subtype 1) (Mycoplasmoides pneumoniae), this protein is Probable ABC transporter ATP-binding protein p29 (p29).